A 347-amino-acid polypeptide reads, in one-letter code: Protein NDL3 (347 aa).

Belongs to the NDRG family. In terms of assembly, interacts with the heterodimers formed by GB1 and GG1, or GB1 and GG2. Interacts with RGS1.

The protein resides in the cytoplasm. Functionally, involved in a signaling pathway that modulates root auxin transport and auxin gradients. Acts partially by positively regulating the auxin carrier PIN2 and AUX1. Acts, together with GB1 as positive regulator of meristem initiation and branching. GB1 and NDL3 positively regulate basipetal inflorescence auxin transport and modulate MAX2 expression in shoots, which regulates organ and lateral meristem formation by the establishment and maintenance of auxin gradients. The chain is Protein NDL3 from Arabidopsis thaliana (Mouse-ear cress).